The primary structure comprises 116 residues: Large ribosomal subunit protein uL18 (116 aa).

This sequence belongs to the universal ribosomal protein uL18 family. In terms of assembly, part of the 50S ribosomal subunit; part of the 5S rRNA/L5/L18/L25 subcomplex. Contacts the 5S and 23S rRNAs.

In terms of biological role, this is one of the proteins that bind and probably mediate the attachment of the 5S RNA into the large ribosomal subunit, where it forms part of the central protuberance. This Novosphingobium aromaticivorans (strain ATCC 700278 / DSM 12444 / CCUG 56034 / CIP 105152 / NBRC 16084 / F199) protein is Large ribosomal subunit protein uL18.